We begin with the raw amino-acid sequence, 369 residues long: Molybdenum import ATP-binding protein ModC (369 aa).

The ABC transporter domain occupies 4–239 (LQLRAVVADR…PRSRFGARIA (236 aa)). 31–38 (GPNGAGKS) contributes to the ATP binding site. Residues 293 to 361 (HGSPRNIVGL…VKAQEVALHP (69 aa)) form the Mop domain.

It belongs to the ABC transporter superfamily. Molybdate importer (TC 3.A.1.8) family. As to quaternary structure, the complex is composed of two ATP-binding proteins (ModC), two transmembrane proteins (ModB) and a solute-binding protein (ModA).

The protein resides in the cell membrane. The enzyme catalyses molybdate(out) + ATP + H2O = molybdate(in) + ADP + phosphate + H(+). Functionally, part of the ABC transporter complex ModABC involved in molybdenum import. Responsible for energy coupling to the transport system. In Mycobacterium tuberculosis (strain CDC 1551 / Oshkosh), this protein is Molybdenum import ATP-binding protein ModC.